The sequence spans 739 residues: Phosphoribosylformylglycinamidine synthase subunit PurL (739 aa).

Histidine 55 is an active-site residue. ATP contacts are provided by tyrosine 58 and lysine 97. Position 99 (glutamate 99) interacts with Mg(2+). Substrate is bound by residues 100-103 (SHNH) and arginine 122. Histidine 101 (proton acceptor) is an active-site residue. Aspartate 123 is a binding site for Mg(2+). Glutamine 246 contributes to the substrate binding site. Mg(2+) is bound at residue aspartate 276. Position 320-322 (320-322 (ESQ)) interacts with substrate. ATP contacts are provided by aspartate 502 and glycine 539. Asparagine 540 contacts Mg(2+). Serine 542 lines the substrate pocket.

Belongs to the FGAMS family. Monomer. Part of the FGAM synthase complex composed of 1 PurL, 1 PurQ and 2 PurS subunits.

It localises to the cytoplasm. It catalyses the reaction N(2)-formyl-N(1)-(5-phospho-beta-D-ribosyl)glycinamide + L-glutamine + ATP + H2O = 2-formamido-N(1)-(5-O-phospho-beta-D-ribosyl)acetamidine + L-glutamate + ADP + phosphate + H(+). Its pathway is purine metabolism; IMP biosynthesis via de novo pathway; 5-amino-1-(5-phospho-D-ribosyl)imidazole from N(2)-formyl-N(1)-(5-phospho-D-ribosyl)glycinamide: step 1/2. Part of the phosphoribosylformylglycinamidine synthase complex involved in the purines biosynthetic pathway. Catalyzes the ATP-dependent conversion of formylglycinamide ribonucleotide (FGAR) and glutamine to yield formylglycinamidine ribonucleotide (FGAM) and glutamate. The FGAM synthase complex is composed of three subunits. PurQ produces an ammonia molecule by converting glutamine to glutamate. PurL transfers the ammonia molecule to FGAR to form FGAM in an ATP-dependent manner. PurS interacts with PurQ and PurL and is thought to assist in the transfer of the ammonia molecule from PurQ to PurL. This Lactiplantibacillus plantarum (strain ATCC BAA-793 / NCIMB 8826 / WCFS1) (Lactobacillus plantarum) protein is Phosphoribosylformylglycinamidine synthase subunit PurL.